Reading from the N-terminus, the 660-residue chain is Bifunctional polymyxin resistance protein ArnA (660 aa).

The formyltransferase ArnAFT stretch occupies residues 1–304 (MKTVVFAYHD…TLGLVQGSRL (304 aa)). 86-88 (HLI) contacts (6R)-10-formyltetrahydrofolate. Catalysis depends on His-104, which acts as the Proton donor; for formyltransferase activity. (6R)-10-formyltetrahydrofolate contacts are provided by residues Arg-114 and 136 to 140 (VKRAD). A dehydrogenase ArnADH region spans residues 314-660 (RRTRVLILGV…RTVDLTDKPS (347 aa)). NAD(+) contacts are provided by residues Asp-347 and 368–369 (DI). UDP-alpha-D-glucuronate contacts are provided by residues Ala-393, Tyr-398, and 432 to 433 (TS). Residue Glu-434 is the Proton acceptor; for decarboxylase activity of the active site. Residues Arg-460, Asn-492, 526 to 535 (KLIDGGKQKR), and Tyr-613 each bind UDP-alpha-D-glucuronate. Arg-619 (proton donor; for decarboxylase activity) is an active-site residue.

It in the N-terminal section; belongs to the Fmt family. UDP-L-Ara4N formyltransferase subfamily. In the C-terminal section; belongs to the NAD(P)-dependent epimerase/dehydratase family. UDP-glucuronic acid decarboxylase subfamily. As to quaternary structure, homohexamer, formed by a dimer of trimers.

It catalyses the reaction UDP-alpha-D-glucuronate + NAD(+) = UDP-beta-L-threo-pentopyranos-4-ulose + CO2 + NADH. It carries out the reaction UDP-4-amino-4-deoxy-beta-L-arabinose + (6R)-10-formyltetrahydrofolate = UDP-4-deoxy-4-formamido-beta-L-arabinose + (6S)-5,6,7,8-tetrahydrofolate + H(+). It functions in the pathway nucleotide-sugar biosynthesis; UDP-4-deoxy-4-formamido-beta-L-arabinose biosynthesis; UDP-4-deoxy-4-formamido-beta-L-arabinose from UDP-alpha-D-glucuronate: step 1/3. The protein operates within nucleotide-sugar biosynthesis; UDP-4-deoxy-4-formamido-beta-L-arabinose biosynthesis; UDP-4-deoxy-4-formamido-beta-L-arabinose from UDP-alpha-D-glucuronate: step 3/3. Its pathway is bacterial outer membrane biogenesis; lipopolysaccharide biosynthesis. In terms of biological role, bifunctional enzyme that catalyzes the oxidative decarboxylation of UDP-glucuronic acid (UDP-GlcUA) to UDP-4-keto-arabinose (UDP-Ara4O) and the addition of a formyl group to UDP-4-amino-4-deoxy-L-arabinose (UDP-L-Ara4N) to form UDP-L-4-formamido-arabinose (UDP-L-Ara4FN). The modified arabinose is attached to lipid A and is required for resistance to polymyxin and cationic antimicrobial peptides. The chain is Bifunctional polymyxin resistance protein ArnA from Escherichia coli (strain K12 / MC4100 / BW2952).